The primary structure comprises 461 residues: D-phenylhydantoinase (461 aa).

Residues histidine 59, histidine 61, and lysine 151 each coordinate a divalent metal cation. Lysine 151 carries the post-translational modification N6-carboxylysine. Position 156 (tyrosine 156) interacts with substrate. Positions 182 and 239 each coordinate a divalent metal cation. Residue serine 286 coordinates substrate. Aspartate 313 provides a ligand contact to a divalent metal cation. Residue asparagine 335 participates in substrate binding.

Belongs to the metallo-dependent hydrolases superfamily. Hydantoinase/dihydropyrimidinase family. In terms of assembly, homotetramer. Requires a divalent metal cation as cofactor. Carboxylation allows a single lysine to coordinate two divalent metal cations.

It catalyses the reaction D-5-phenylhydantoin + H2O = N-carbamoyl-D-phenylglycine + H(+). Catalyzes the stereospecific hydrolysis of the cyclic amide bond of D-hydantoin derivatives with an aromatic side chains at the 5'-position. Has no activity on dihydropyrimidines. The physiological function is unknown. The chain is D-phenylhydantoinase from Escherichia coli O127:H6 (strain E2348/69 / EPEC).